Consider the following 449-residue polypeptide: NADP-specific glutamate dehydrogenase (449 aa).

Lys125 is an active-site residue.

It belongs to the Glu/Leu/Phe/Val dehydrogenases family. As to quaternary structure, homohexamer.

The catalysed reaction is L-glutamate + NADP(+) + H2O = 2-oxoglutarate + NH4(+) + NADPH + H(+). This chain is NADP-specific glutamate dehydrogenase, found in Giardia intestinalis (Giardia lamblia).